A 158-amino-acid polypeptide reads, in one-letter code: Transcriptional repressor NrdR (158 aa).

The tract at residues 1–20 is disordered; that stretch reads MRCPYCQSEDTQVKDSRPAE. A zinc finger spans residues 3–34; it reads CPYCQSEDTQVKDSRPAEDGAVIRRRRVCSVC. Residues 11-20 are compositionally biased toward basic and acidic residues; the sequence is TQVKDSRPAE. In terms of domain architecture, ATP-cone spans 49 to 139; it reads LMVVKKSGRR…VYRNFSKAVD (91 aa).

It belongs to the NrdR family. Zn(2+) is required as a cofactor.

In terms of biological role, negatively regulates transcription of bacterial ribonucleotide reductase nrd genes and operons by binding to NrdR-boxes. This Brucella anthropi (strain ATCC 49188 / DSM 6882 / CCUG 24695 / JCM 21032 / LMG 3331 / NBRC 15819 / NCTC 12168 / Alc 37) (Ochrobactrum anthropi) protein is Transcriptional repressor NrdR.